The chain runs to 112 residues: MSGKIKVTFIINDGEEKTVEAPIGLSILEIAHSNDLDLEGACEGSLACATCHVILEEEFYNKLKKPTEAEEDMLDLAFGLTDTSRLGCQIILTEELDGIKVHLPAATRNIKL.

The 2Fe-2S ferredoxin-type domain maps to 5-107 (IKVTFIINDG…GIKVHLPAAT (103 aa)). [2Fe-2S] cluster-binding residues include Cys42, Cys48, Cys51, and Cys88.

Belongs to the adrenodoxin/putidaredoxin family. The cofactor is [2Fe-2S] cluster.

Functionally, ferredoxin are iron-sulfur proteins that transfer electrons in a wide variety of metabolic reactions. This Rickettsia rickettsii protein is 2Fe-2S ferredoxin (fdxB).